An 83-amino-acid polypeptide reads, in one-letter code: U5-theraphotoxin-Hs1c (83 aa).

The N-terminal stretch at 1-21 is a signal peptide; it reads MKTSMFLTLTGLVLLFVVCYA. A propeptide spanning residues 22–49 is cleaved from the precursor; the sequence is SESEEKEFPKELLSSIFAADSDFKVEER. 3 cysteine pairs are disulfide-bonded: cysteine 51–cysteine 63, cysteine 56–cysteine 68, and cysteine 62–cysteine 75.

This sequence belongs to the neurotoxin 10 (Hwtx-1) family. 51 (Hntx-8) subfamily. Hntx-8 sub-subfamily. Expressed by the venom gland.

The protein localises to the secreted. Functionally, agglutinates erythrocytes. The chain is U5-theraphotoxin-Hs1c from Cyriopagopus schmidti (Chinese bird spider).